A 337-amino-acid polypeptide reads, in one-letter code: RNA 3'-terminal phosphate cyclase (337 aa).

Residues Gln-101 and 282 to 285 (HMSD) each bind ATP. Catalysis depends on His-306, which acts as the Tele-AMP-histidine intermediate.

This sequence belongs to the RNA 3'-terminal cyclase family. Type 1 subfamily.

It localises to the cytoplasm. It catalyses the reaction a 3'-end 3'-phospho-ribonucleotide-RNA + ATP = a 3'-end 2',3'-cyclophospho-ribonucleotide-RNA + AMP + diphosphate. Its function is as follows. Catalyzes the conversion of 3'-phosphate to a 2',3'-cyclic phosphodiester at the end of RNA. The mechanism of action of the enzyme occurs in 3 steps: (A) adenylation of the enzyme by ATP; (B) transfer of adenylate to an RNA-N3'P to produce RNA-N3'PP5'A; (C) and attack of the adjacent 2'-hydroxyl on the 3'-phosphorus in the diester linkage to produce the cyclic end product. The biological role of this enzyme is unknown but it is likely to function in some aspects of cellular RNA processing. The chain is RNA 3'-terminal phosphate cyclase (rtcA) from Saccharolobus solfataricus (strain ATCC 35092 / DSM 1617 / JCM 11322 / P2) (Sulfolobus solfataricus).